A 261-amino-acid chain; its full sequence is uncharacterized protein (261 aa).

This is an uncharacterized protein from Enterobacteriaceae (Bacteriophage P2).